Reading from the N-terminus, the 132-residue chain is Small ribosomal subunit protein uS8 (132 aa).

Belongs to the universal ribosomal protein uS8 family. In terms of assembly, part of the 30S ribosomal subunit. Contacts proteins S5 and S12.

Functionally, one of the primary rRNA binding proteins, it binds directly to 16S rRNA central domain where it helps coordinate assembly of the platform of the 30S subunit. This chain is Small ribosomal subunit protein uS8, found in Leuconostoc citreum (strain KM20).